We begin with the raw amino-acid sequence, 450 residues long: Glucose-6-phosphate isomerase (450 aa).

E291 serves as the catalytic Proton donor. Residues H312 and K426 contribute to the active site.

The protein belongs to the GPI family.

It localises to the cytoplasm. The catalysed reaction is alpha-D-glucose 6-phosphate = beta-D-fructose 6-phosphate. Its pathway is carbohydrate biosynthesis; gluconeogenesis. It functions in the pathway carbohydrate degradation; glycolysis; D-glyceraldehyde 3-phosphate and glycerone phosphate from D-glucose: step 2/4. Catalyzes the reversible isomerization of glucose-6-phosphate to fructose-6-phosphate. The sequence is that of Glucose-6-phosphate isomerase from Clostridium perfringens (strain ATCC 13124 / DSM 756 / JCM 1290 / NCIMB 6125 / NCTC 8237 / Type A).